The primary structure comprises 213 residues: MAGSSGTNGQGFFTTRVDTFLNWARSNSLMPMPMGLACCAIEMMGFAGPKYDSARFGSEAMRFSPRQADLMIVAGWCSYKMSHAIRRVWDQMGDPKWCIAMGACASTGGMHRCYGVVQGVDNFLPVDVYISGCPPRPESVLHALMDIQEKIRNEYSVVQDYEFGKARERAPIMPENTNRFPGQLEKPKTSTLTLEAPDADDAEEASTPEPVAA.

4 residues coordinate [4Fe-4S] cluster: Cys-38, Cys-39, Cys-104, and Cys-133. Residues 172 to 213 (IMPENTNRFPGQLEKPKTSTLTLEAPDADDAEEASTPEPVAA) are disordered. Over residues 197 to 206 (PDADDAEEAS) the composition is skewed to acidic residues.

This sequence belongs to the complex I 20 kDa subunit family. NDH-1 is composed of 14 different subunits. Subunits NuoB, C, D, E, F, and G constitute the peripheral sector of the complex. [4Fe-4S] cluster serves as cofactor.

The protein resides in the cell inner membrane. The enzyme catalyses a quinone + NADH + 5 H(+)(in) = a quinol + NAD(+) + 4 H(+)(out). Its function is as follows. NDH-1 shuttles electrons from NADH, via FMN and iron-sulfur (Fe-S) centers, to quinones in the respiratory chain. The immediate electron acceptor for the enzyme in this species is believed to be a menaquinone. Couples the redox reaction to proton translocation (for every two electrons transferred, four hydrogen ions are translocated across the cytoplasmic membrane), and thus conserves the redox energy in a proton gradient. In Salinibacter ruber (strain DSM 13855 / M31), this protein is NADH-quinone oxidoreductase subunit B (nuoB).